The sequence spans 73 residues: Conotoxin CnIIIG (73 aa).

The N-terminal stretch at 1-19 (MSKLGVLLTICLLLLPLTA) is a signal peptide. Positions 20 to 48 (LPMDEDQPADQPADRMQDDISSEQYPLFD) are excised as a propeptide. At Gln-51 the chain carries Pyrrolidone carboxylic acid. 3 disulfide bridges follow: Cys-53/Cys-72, Cys-54/Cys-70, and Cys-60/Cys-73.

This sequence belongs to the conotoxin M superfamily. In terms of tissue distribution, expressed by the venom duct.

The protein localises to the secreted. Its function is as follows. Shows a paralytic effect in fish. The sequence is that of Conotoxin CnIIIG from Conus consors (Singed cone).